A 154-amino-acid polypeptide reads, in one-letter code: NADPH-dependent 7-cyano-7-deazaguanine reductase (154 aa).

The segment covering 1 to 21 (MPNTDVSSLSMLGQQTETAQS) has biased composition (polar residues). A disordered region spans residues 1-28 (MPNTDVSSLSMLGQQTETAQSPEEAVLE). Cys-52 acts as the Thioimide intermediate in catalysis. Asp-59 functions as the Proton donor in the catalytic mechanism. Residues 74–76 (VES) and 93–94 (HE) each bind substrate.

This sequence belongs to the GTP cyclohydrolase I family. QueF type 1 subfamily.

The protein resides in the cytoplasm. The enzyme catalyses 7-aminomethyl-7-carbaguanine + 2 NADP(+) = 7-cyano-7-deazaguanine + 2 NADPH + 3 H(+). The protein operates within tRNA modification; tRNA-queuosine biosynthesis. Functionally, catalyzes the NADPH-dependent reduction of 7-cyano-7-deazaguanine (preQ0) to 7-aminomethyl-7-deazaguanine (preQ1). The chain is NADPH-dependent 7-cyano-7-deazaguanine reductase from Rhizobium johnstonii (strain DSM 114642 / LMG 32736 / 3841) (Rhizobium leguminosarum bv. viciae).